The chain runs to 262 residues: Putative ABC transporter ATP-binding protein SAV_3608 (262 aa).

Residues 18-248 form the ABC transporter domain; it reads LDVAGLAFAY…DTLMRAHRLE (231 aa). An ATP-binding site is contributed by 51 to 58; it reads GPNGAGKT.

This sequence belongs to the ABC transporter superfamily.

Its subcellular location is the cell membrane. Its function is as follows. Probably part of an ABC transporter complex. Responsible for energy coupling to the transport system. This is Putative ABC transporter ATP-binding protein SAV_3608 from Streptomyces avermitilis (strain ATCC 31267 / DSM 46492 / JCM 5070 / NBRC 14893 / NCIMB 12804 / NRRL 8165 / MA-4680).